Here is a 290-residue protein sequence, read N- to C-terminus: Multiple sugar-binding transport system permease protein MsmF (290 aa).

Transmembrane regions (helical) follow at residues 12–32 (GWTF…FPMF), 72–92 (FTLV…IIIA), 104–124 (FFRA…SLIF), 156–176 (VIAS…ILFL), 201–221 (FWSV…IMAL), 231–253 (IFAL…VYNY), and 260–280 (YGYA…VSVL). In terms of domain architecture, ABC transmembrane type-1 spans 70-281 (IGFTLVLTLA…IIIGIVSVLQ (212 aa)).

It belongs to the binding-protein-dependent transport system permease family. MalFG subfamily.

The protein resides in the cell membrane. Involved in a binding protein-dependent transport system responsible for the uptake of melibiose, raffinose and isomaltotriose. The chain is Multiple sugar-binding transport system permease protein MsmF (msmF) from Streptococcus mutans serotype c (strain ATCC 700610 / UA159).